The following is a 209-amino-acid chain: ATP-dependent Clp protease proteolytic subunit (209 aa).

Ser103 functions as the Nucleophile in the catalytic mechanism. Residue His128 is part of the active site.

Belongs to the peptidase S14 family. In terms of assembly, fourteen ClpP subunits assemble into 2 heptameric rings which stack back to back to give a disk-like structure with a central cavity, resembling the structure of eukaryotic proteasomes.

The protein resides in the cytoplasm. The catalysed reaction is Hydrolysis of proteins to small peptides in the presence of ATP and magnesium. alpha-casein is the usual test substrate. In the absence of ATP, only oligopeptides shorter than five residues are hydrolyzed (such as succinyl-Leu-Tyr-|-NHMec, and Leu-Tyr-Leu-|-Tyr-Trp, in which cleavage of the -Tyr-|-Leu- and -Tyr-|-Trp bonds also occurs).. Cleaves peptides in various proteins in a process that requires ATP hydrolysis. Has a chymotrypsin-like activity. Plays a major role in the degradation of misfolded proteins. This Lawsonia intracellularis (strain PHE/MN1-00) protein is ATP-dependent Clp protease proteolytic subunit.